We begin with the raw amino-acid sequence, 40 residues long: Small polypeptide DEVIL 6 (40 aa).

A required for DVL/RTFL small polypeptide activity region spans residues 9-40 (SSSRGLGGVLREQRAKLYIIKRCVVMLLCWQD). The helical transmembrane segment at 12 to 28 (RGLGGVLREQRAKLYII) threads the bilayer.

The protein belongs to the DVL/RTFL small polypeptides family.

The protein localises to the cell membrane. Functionally, small polypeptide acting as a regulatory molecule which coordinates cellular responses required for differentiation, growth and development, probably by restricting polar cell proliferation in lateral organs and coordinating socket cell recruitment and differentiation at trichome sites. The protein is Small polypeptide DEVIL 6 of Arabidopsis thaliana (Mouse-ear cress).